The primary structure comprises 298 residues: Bifunctional protein FolD (298 aa).

Residues 166–168, Ser191, and Ile232 contribute to the NADP(+) site; that span reads GRS.

It belongs to the tetrahydrofolate dehydrogenase/cyclohydrolase family. In terms of assembly, homodimer.

The catalysed reaction is (6R)-5,10-methylene-5,6,7,8-tetrahydrofolate + NADP(+) = (6R)-5,10-methenyltetrahydrofolate + NADPH. The enzyme catalyses (6R)-5,10-methenyltetrahydrofolate + H2O = (6R)-10-formyltetrahydrofolate + H(+). It participates in one-carbon metabolism; tetrahydrofolate interconversion. Functionally, catalyzes the oxidation of 5,10-methylenetetrahydrofolate to 5,10-methenyltetrahydrofolate and then the hydrolysis of 5,10-methenyltetrahydrofolate to 10-formyltetrahydrofolate. The polypeptide is Bifunctional protein FolD (Parvibaculum lavamentivorans (strain DS-1 / DSM 13023 / NCIMB 13966)).